Consider the following 396-residue polypeptide: 4-hydroxy-3-methylbut-2-en-1-yl diphosphate synthase (ferredoxin) (396 aa).

The [4Fe-4S] cluster site is built by Cys-305, Cys-308, Cys-339, and Glu-346.

It belongs to the IspG family. [4Fe-4S] cluster serves as cofactor.

The enzyme catalyses (2E)-4-hydroxy-3-methylbut-2-enyl diphosphate + 2 oxidized [2Fe-2S]-[ferredoxin] + H2O = 2-C-methyl-D-erythritol 2,4-cyclic diphosphate + 2 reduced [2Fe-2S]-[ferredoxin] + H(+). It participates in isoprenoid biosynthesis; isopentenyl diphosphate biosynthesis via DXP pathway; isopentenyl diphosphate from 1-deoxy-D-xylulose 5-phosphate: step 5/6. Its function is as follows. Converts 2C-methyl-D-erythritol 2,4-cyclodiphosphate (ME-2,4cPP) into 1-hydroxy-2-methyl-2-(E)-butenyl 4-diphosphate. This is 4-hydroxy-3-methylbut-2-en-1-yl diphosphate synthase (ferredoxin) from Gloeobacter violaceus (strain ATCC 29082 / PCC 7421).